The primary structure comprises 257 residues: Imidazole glycerol phosphate synthase subunit HisF (257 aa).

Catalysis depends on residues Asp-12 and Asp-131.

Belongs to the HisA/HisF family. In terms of assembly, heterodimer of HisH and HisF.

It localises to the cytoplasm. It carries out the reaction 5-[(5-phospho-1-deoxy-D-ribulos-1-ylimino)methylamino]-1-(5-phospho-beta-D-ribosyl)imidazole-4-carboxamide + L-glutamine = D-erythro-1-(imidazol-4-yl)glycerol 3-phosphate + 5-amino-1-(5-phospho-beta-D-ribosyl)imidazole-4-carboxamide + L-glutamate + H(+). The protein operates within amino-acid biosynthesis; L-histidine biosynthesis; L-histidine from 5-phospho-alpha-D-ribose 1-diphosphate: step 5/9. Functionally, IGPS catalyzes the conversion of PRFAR and glutamine to IGP, AICAR and glutamate. The HisF subunit catalyzes the cyclization activity that produces IGP and AICAR from PRFAR using the ammonia provided by the HisH subunit. In Rhodococcus erythropolis (strain PR4 / NBRC 100887), this protein is Imidazole glycerol phosphate synthase subunit HisF.